Reading from the N-terminus, the 253-residue chain is Diphthine synthase (253 aa).

S-adenosyl-L-methionine-binding positions include D83, L86, 111-112 (SI), L163, and L205.

Belongs to the diphthine synthase family. In terms of assembly, homodimer.

It carries out the reaction 2-[(3S)-amino-3-carboxypropyl]-L-histidyl-[translation elongation factor 2] + 3 S-adenosyl-L-methionine = diphthine-[translation elongation factor 2] + 3 S-adenosyl-L-homocysteine + 3 H(+). It participates in protein modification; peptidyl-diphthamide biosynthesis. Its function is as follows. S-adenosyl-L-methionine-dependent methyltransferase that catalyzes the trimethylation of the amino group of the modified target histidine residue in translation elongation factor 2 (EF-2), to form an intermediate called diphthine. The three successive methylation reactions represent the second step of diphthamide biosynthesis. The protein is Diphthine synthase of Pyrobaculum neutrophilum (strain DSM 2338 / JCM 9278 / NBRC 100436 / V24Sta) (Thermoproteus neutrophilus).